The primary structure comprises 307 residues: UDP-N-acetylenolpyruvoylglucosamine reductase (307 aa).

The region spanning 34 to 198 (LGGKADVYIT…LEATFALKKA (165 aa)) is the FAD-binding PCMH-type domain. Residue Arg-177 is part of the active site. Ser-227 serves as the catalytic Proton donor. The active site involves Glu-297.

The protein belongs to the MurB family. FAD serves as cofactor.

It is found in the cytoplasm. It catalyses the reaction UDP-N-acetyl-alpha-D-muramate + NADP(+) = UDP-N-acetyl-3-O-(1-carboxyvinyl)-alpha-D-glucosamine + NADPH + H(+). Its pathway is cell wall biogenesis; peptidoglycan biosynthesis. Its function is as follows. Cell wall formation. The polypeptide is UDP-N-acetylenolpyruvoylglucosamine reductase (Oceanobacillus iheyensis (strain DSM 14371 / CIP 107618 / JCM 11309 / KCTC 3954 / HTE831)).